We begin with the raw amino-acid sequence, 215 residues long: Ion-translocating oxidoreductase complex subunit G (215 aa).

The chain crosses the membrane as a helical span at residues 9–29; sequence GLILSLFAIITSGLIALTYFG. At threonine 176 the chain carries FMN phosphoryl threonine.

Belongs to the RnfG family. As to quaternary structure, the complex is composed of six subunits: RnfA, RnfB, RnfC, RnfD, RnfE and RnfG. FMN serves as cofactor.

It localises to the cell inner membrane. Functionally, part of a membrane-bound complex that couples electron transfer with translocation of ions across the membrane. This is Ion-translocating oxidoreductase complex subunit G from Pseudoalteromonas atlantica (strain T6c / ATCC BAA-1087).